Consider the following 400-residue polypeptide: Aspartate/prephenate aminotransferase (400 aa).

Residues Gly-39, Trp-125, and Asn-175 each coordinate L-aspartate. Lys-239 is subject to N6-(pyridoxal phosphate)lysine. Residue Arg-375 participates in L-aspartate binding.

Belongs to the class-I pyridoxal-phosphate-dependent aminotransferase family. As to quaternary structure, homodimer. Pyridoxal 5'-phosphate is required as a cofactor.

It localises to the cytoplasm. It carries out the reaction L-aspartate + 2-oxoglutarate = oxaloacetate + L-glutamate. The catalysed reaction is L-arogenate + 2-oxoglutarate = prephenate + L-glutamate. Its function is as follows. Catalyzes the reversible conversion of aspartate and 2-oxoglutarate to glutamate and oxaloacetate. Can also transaminate prephenate in the presence of glutamate. The polypeptide is Aspartate/prephenate aminotransferase (Cereibacter sphaeroides (strain ATCC 17029 / ATH 2.4.9) (Rhodobacter sphaeroides)).